The primary structure comprises 156 residues: Glutaredoxin-2, mitochondrial (156 aa).

The N-terminal 19 residues, 1-19, are a transit peptide targeting the mitochondrion; sequence MSWRRAASVGRRLVASGRI. A Glutaredoxin domain is found at 50–150; sequence VNQIQETISN…PLVHQCYLKK (101 aa). C61 contributes to the [2Fe-2S] cluster binding site. K67 contacts glutathione. At C70 the chain carries S-glutathionyl cysteine; alternate. A disulfide bridge connects residues C70 and C73. 2 residues coordinate glutathione: Q102 and V114. C146 contributes to the [2Fe-2S] cluster binding site.

It belongs to the glutaredoxin family. Monomer; active form. Homodimer; inactive form. The homodimer is probably linked by 1 2Fe-2S cluster. In terms of tissue distribution, widely expressed. Highly expressed in testis, and at much lower level in kidney and brain.

Its subcellular location is the mitochondrion. The protein resides in the nucleus. Its activity is regulated as follows. The 2Fe-2S present in the homodimer leads to inactivation of the enzyme. The 2Fe-2S may serve as a redox sensor: the presence of one-electron oxidants or reductants leading to the loss of the 2Fe-2S cluster, subsequent monomerization and activation of the enzyme. Glutathione-dependent oxidoreductase that facilitates the maintenance of mitochondrial redox homeostasis upon induction of apoptosis by oxidative stress. Involved in response to hydrogen peroxide and regulation of apoptosis caused by oxidative stress. Acts as a very efficient catalyst of monothiol reactions because of its high affinity for protein glutathione-mixed disulfides. Can receive electrons not only from glutathione (GSH), but also from thioredoxin reductase supporting both monothiol and dithiol reactions. Efficiently catalyzes both glutathionylation and deglutathionylation of mitochondrial complex I, which in turn regulates the superoxide production by the complex. Overexpression decreases the susceptibility to apoptosis and prevents loss of cardiolipin and cytochrome c release. This Mus musculus (Mouse) protein is Glutaredoxin-2, mitochondrial (Glrx2).